Here is a 207-residue protein sequence, read N- to C-terminus: Probable flagellin 2 (207 aa).

Residues 1–14 (MRVGSRKLRRDEKG) constitute a propeptide that is removed on maturation.

It belongs to the archaeal flagellin family.

Its subcellular location is the archaeal flagellum. Flagellin is the subunit protein which polymerizes to form the filaments of archaeal flagella. This is Probable flagellin 2 (flaB2) from Archaeoglobus fulgidus (strain ATCC 49558 / DSM 4304 / JCM 9628 / NBRC 100126 / VC-16).